We begin with the raw amino-acid sequence, 207 residues long: LexA repressor (207 aa).

The segment at residues 28–48 is a DNA-binding region (H-T-H motif); that stretch reads RAEIARELGFRSANAAEEHLK. Residues Ser124 and Lys161 each act as for autocatalytic cleavage activity in the active site.

The protein belongs to the peptidase S24 family. As to quaternary structure, homodimer.

It catalyses the reaction Hydrolysis of Ala-|-Gly bond in repressor LexA.. Its function is as follows. Represses a number of genes involved in the response to DNA damage (SOS response), including recA and lexA. In the presence of single-stranded DNA, RecA interacts with LexA causing an autocatalytic cleavage which disrupts the DNA-binding part of LexA, leading to derepression of the SOS regulon and eventually DNA repair. The protein is LexA repressor of Aliivibrio salmonicida (strain LFI1238) (Vibrio salmonicida (strain LFI1238)).